The sequence spans 227 residues: CDP-diacylglycerol--glycerol-3-phosphate 3-phosphatidyltransferase (227 aa).

The next 5 helical transmembrane spans lie at 30-50 (IFIAVPTIIFLGLNHLLGSVA), 58-78 (VTIHLQVSLFIGGVLFITAVI), 112-132 (VLIALVAYGYFHFSFLIVIVL), 159-179 (WKTTWQMIAILMSCFVFSFSL), and 192-212 (WAIVHLPYYLATAFSLVSFGI).

Belongs to the CDP-alcohol phosphatidyltransferase class-I family.

The protein localises to the cell membrane. The catalysed reaction is a CDP-1,2-diacyl-sn-glycerol + sn-glycerol 3-phosphate = a 1,2-diacyl-sn-glycero-3-phospho-(1'-sn-glycero-3'-phosphate) + CMP + H(+). It participates in phospholipid metabolism; phosphatidylglycerol biosynthesis; phosphatidylglycerol from CDP-diacylglycerol: step 1/2. In terms of biological role, this protein catalyzes the committed step to the synthesis of the acidic phospholipids. The protein is CDP-diacylglycerol--glycerol-3-phosphate 3-phosphatidyltransferase (pgsA) of Mycoplasma pneumoniae (strain ATCC 29342 / M129 / Subtype 1) (Mycoplasmoides pneumoniae).